The primary structure comprises 107 residues: Phosphoribosyl-ATP pyrophosphatase (107 aa).

It belongs to the PRA-PH family.

Its subcellular location is the cytoplasm. It catalyses the reaction 1-(5-phospho-beta-D-ribosyl)-ATP + H2O = 1-(5-phospho-beta-D-ribosyl)-5'-AMP + diphosphate + H(+). Its pathway is amino-acid biosynthesis; L-histidine biosynthesis; L-histidine from 5-phospho-alpha-D-ribose 1-diphosphate: step 2/9. This Bacillus anthracis (strain A0248) protein is Phosphoribosyl-ATP pyrophosphatase.